The primary structure comprises 366 residues: Chorismate synthase (366 aa).

R47 provides a ligand contact to NADP(+). FMN-binding positions include R124–S126, G286, K301–T305, and R327.

The protein belongs to the chorismate synthase family. Homotetramer. It depends on FMNH2 as a cofactor.

The catalysed reaction is 5-O-(1-carboxyvinyl)-3-phosphoshikimate = chorismate + phosphate. It participates in metabolic intermediate biosynthesis; chorismate biosynthesis; chorismate from D-erythrose 4-phosphate and phosphoenolpyruvate: step 7/7. Functionally, catalyzes the anti-1,4-elimination of the C-3 phosphate and the C-6 proR hydrogen from 5-enolpyruvylshikimate-3-phosphate (EPSP) to yield chorismate, which is the branch point compound that serves as the starting substrate for the three terminal pathways of aromatic amino acid biosynthesis. This reaction introduces a second double bond into the aromatic ring system. The sequence is that of Chorismate synthase from Methylacidiphilum infernorum (isolate V4) (Methylokorus infernorum (strain V4)).